The following is a 489-amino-acid chain: Dipeptide and tripeptide permease B (489 aa).

The Cytoplasmic portion of the chain corresponds to 1-27; the sequence is MNTTAPTGLLQQPRPFFMIFFVELWER. Residues 28–48 traverse the membrane as a helical segment; that stretch reads FGYYGVQGILAVFFVKQLGFS. Residues 49–52 lie on the Periplasmic side of the membrane; it reads QEQA. A helical transmembrane segment spans residues 53–73; the sequence is FITFGAFAALVYGLISIGGYV. Residues 74–82 are Cytoplasmic-facing; it reads GDHLLGTKR. The helical transmembrane segment at 83–103 threads the bilayer; the sequence is TLVLGAIVLAIGYFMTGMSLL. Topologically, residues 104–106 are periplasmic; sequence NPD. The chain crosses the membrane as a helical span at residues 107–127; it reads LIFIALGTIAVGNGLFKANPA. The Cytoplasmic portion of the chain corresponds to 128 to 146; sequence SLLSKCYQPKDPRLDGAFT. A helical transmembrane segment spans residues 147-167; the sequence is LFYMSINIGSLLSLSLAPVIA. The Periplasmic segment spans residues 168–172; that stretch reads DKFGY. The chain crosses the membrane as a helical span at residues 173–193; the sequence is AVTYNLCGAGLIVALLVYFAC. The Cytoplasmic portion of the chain corresponds to 194–214; it reads RGMVKNIGSEPDHKPLRFRNL. The helical transmembrane segment at 215–235 threads the bilayer; the sequence is LLVLLGTVVMIFLCAWLMHNV. Residue Lys236 is a topological domain, periplasmic. Residues 237–257 form a helical membrane-spanning segment; sequence IANLVLIVLSIVVTIFFFREA. The Cytoplasmic portion of the chain corresponds to 258–267; sequence FRLDKTGRNK. The chain crosses the membrane as a helical span at residues 268-288; sequence MFVAFILMIEAVLFYILYAQM. Residues 289-315 lie on the Periplasmic side of the membrane; the sequence is PTSLNFFAINNVHHEILGFAINPVSFQ. Residues 316–338 form a helical membrane-spanning segment; the sequence is ALNPFWVVVASPVLAAIYTRLGS. Over 339–348 the chain is Cytoplasmic; it reads KGKDLTMPMK. Residues 349–369 traverse the membrane as a helical segment; sequence FTLGMFLCALGFLTAAAGMWF. At 370–379 the chain is on the periplasmic side; the sequence is ADAQGLTSPW. Residues 380–400 traverse the membrane as a helical segment; it reads FIVLVYLFQSLGELLISALGL. Residues 401-410 lie on the Cytoplasmic side of the membrane; it reads AMVAALVPQH. Residues 411–431 form a helical membrane-spanning segment; sequence LMGFILGMWFLTQAAAFLLGG. Residues 432–454 lie on the Periplasmic side of the membrane; the sequence is YVATFTAVPENITDPLQTLPIYT. Residues 455-475 form a helical membrane-spanning segment; sequence GVFSKIGLVTLAVTVVMAIMV. Residues 476–489 lie on the Cytoplasmic side of the membrane; that stretch reads PWLNRMINTPGTEQ.

It belongs to the major facilitator superfamily. Proton-dependent oligopeptide transporter (POT/PTR) (TC 2.A.17) family. DtpB subfamily.

The protein resides in the cell inner membrane. Functionally, proton-dependent permease that transports di- and tripeptides. The sequence is that of Dipeptide and tripeptide permease B from Salmonella typhimurium (strain LT2 / SGSC1412 / ATCC 700720).